The primary structure comprises 898 residues: Serine/threonine-protein kinase PKH3 (898 aa).

One can recognise a Protein kinase domain in the interval 11–293; that stretch reads FIFKEELGHG…LEQIKRHPYF (283 aa). Residues 17-25 and Lys-41 each bind ATP; that span reads LGHGSYSTV. Residue Asp-138 is the Proton acceptor of the active site. 2 disordered regions span residues 435-484 and 675-850; these read PPKV…PSTE and DSKA…EKYS. Over residues 459–468 the composition is skewed to polar residues; sequence PLQTSSIPQK. A compositionally biased stretch (low complexity) spans 469–483; the sequence is LSTSSASSALSAPST. The residue at position 696 (Ser-696) is a Phosphoserine. Residues 697-721 show a composition bias toward polar residues; sequence IGNNVTTLSYTAKNGSQNNAPQNDN. Residues 723–738 show a composition bias toward basic and acidic residues; the sequence is GEEKPFRIPSSTKDRP. Polar residues-rich tracts occupy residues 740 to 758, 771 to 782, and 789 to 803; these read ANST…NNAG, SAPSTNTYTNGS, and RPST…NILT. Ser-753 carries the phosphoserine modification. The segment covering 804–817 has biased composition (low complexity); that stretch reads SKKQGSSVFSPSSS. The span at 818–831 shows a compositional bias: polar residues; that stretch reads TTKPQIKTTGYRQP. A Phosphoserine modification is found at Ser-871.

The protein belongs to the protein kinase superfamily. Ser/Thr protein kinase family.

It carries out the reaction L-seryl-[protein] + ATP = O-phospho-L-seryl-[protein] + ADP + H(+). The catalysed reaction is L-threonyl-[protein] + ATP = O-phospho-L-threonyl-[protein] + ADP + H(+). Functionally, serine/threonine-protein kinase which may phosphorylate the same targets substrates as PKH1 and PKH2, 2 upstream activators of PKC1. The polypeptide is Serine/threonine-protein kinase PKH3 (PKH3) (Saccharomyces cerevisiae (strain ATCC 204508 / S288c) (Baker's yeast)).